The chain runs to 235 residues: Pyridoxine 5'-phosphate synthase (235 aa).

Asparagine 7 lines the 3-amino-2-oxopropyl phosphate pocket. 9 to 10 (DH) is a binding site for 1-deoxy-D-xylulose 5-phosphate. Arginine 18 lines the 3-amino-2-oxopropyl phosphate pocket. The Proton acceptor role is filled by histidine 43. 1-deoxy-D-xylulose 5-phosphate contacts are provided by arginine 45 and histidine 50. The Proton acceptor role is filled by glutamate 70. Threonine 100 provides a ligand contact to 1-deoxy-D-xylulose 5-phosphate. Histidine 187 functions as the Proton donor in the catalytic mechanism. 3-amino-2-oxopropyl phosphate contacts are provided by residues glycine 188 and 209–210 (GH).

It belongs to the PNP synthase family. Homooctamer; tetramer of dimers.

It is found in the cytoplasm. The catalysed reaction is 3-amino-2-oxopropyl phosphate + 1-deoxy-D-xylulose 5-phosphate = pyridoxine 5'-phosphate + phosphate + 2 H2O + H(+). The protein operates within cofactor biosynthesis; pyridoxine 5'-phosphate biosynthesis; pyridoxine 5'-phosphate from D-erythrose 4-phosphate: step 5/5. Catalyzes the complicated ring closure reaction between the two acyclic compounds 1-deoxy-D-xylulose-5-phosphate (DXP) and 3-amino-2-oxopropyl phosphate (1-amino-acetone-3-phosphate or AAP) to form pyridoxine 5'-phosphate (PNP) and inorganic phosphate. This Desulfatibacillum aliphaticivorans protein is Pyridoxine 5'-phosphate synthase.